The following is a 224-amino-acid chain: Cysteine S-methyltransferase NleE (224 aa).

An interaction with host proteins TAB2, TAB3 and ZRANB3 region spans residues 49–52 (GITR). S-adenosyl-L-methionine is bound by residues alanine 92, serine 98, arginine 107, glutamine 111, tyrosine 204, and glutamate 208.

This sequence belongs to the NleE/OspZ family. In terms of assembly, monomer.

The protein resides in the secreted. Its subcellular location is the host nucleus. The catalysed reaction is L-cysteinyl-[protein] + S-adenosyl-L-methionine = S-methyl-L-cysteinyl-[protein] + S-adenosyl-L-homocysteine + H(+). In terms of biological role, cysteine methyltransferase effector that inhibits host cell NF-kappa-B activation by preventing nuclear translocation of host protein RELA/p65. Acts by mediating cysteine methylation of host proteins TAB2 and TAB3: methylation of a conserved cysteine residue of the RanBP2-type zinc finger (NZF) of TAB2 and TAB3 disrupts zinc-binding, thereby inactivating the ubiquitin chain-binding activity of TAB2 and TAB3, leading to NF-kappa-B inactivation. Also mediates cysteine methylation of host protein ZRANB3, inactivating its ability to bind ubiquitin chains. The protein is Cysteine S-methyltransferase NleE of Escherichia coli O127:H6 (strain E2348/69 / EPEC).